The following is a 119-amino-acid chain: Basic phospholipase A2 acanthin-1 (119 aa).

Disulfide bonds link Cys-11/Cys-71, Cys-27/Cys-118, Cys-29/Cys-45, Cys-44/Cys-99, Cys-51/Cys-92, Cys-60/Cys-85, and Cys-78/Cys-90. The Ca(2+) site is built by Tyr-28, Gly-30, and Gly-32. Residue His-48 is part of the active site. Asp-49 is a Ca(2+) binding site. Asp-93 is a catalytic residue.

Ca(2+) serves as cofactor. In terms of tissue distribution, expressed by the venom gland.

It is found in the secreted. The catalysed reaction is a 1,2-diacyl-sn-glycero-3-phosphocholine + H2O = a 1-acyl-sn-glycero-3-phosphocholine + a fatty acid + H(+). In terms of biological role, snake venom phospholipase A2 (PLA2) that potently inhibits ADP-(IC(50)=10 nM) and collagen-induced (IC(50)=7 nM) platelet aggregation when tested on human whole blood. PLA2 catalyzes the calcium-dependent hydrolysis of the 2-acyl groups in 3-sn-phosphoglycerides. The protein is Basic phospholipase A2 acanthin-1 of Acanthophis antarcticus (Common death adder).